Here is a 399-residue protein sequence, read N- to C-terminus: Elongation factor Tu (399 aa).

In terms of domain architecture, tr-type G spans 10-209 (KPHVNIGTIG…EVDAYIPTPE (200 aa)). A G1 region spans residues 19 to 26 (GHVDHGKT). A GTP-binding site is contributed by 19–26 (GHVDHGKT). T26 contributes to the Mg(2+) binding site. Residues 60-64 (GITIA) form a G2 region. The interval 81-84 (DCPG) is G3. Residues 81–85 (DCPGH) and 136–139 (NKQD) contribute to the GTP site. Residues 136-139 (NKQD) are G4. Residues 174-176 (SAL) form a G5 region.

Belongs to the TRAFAC class translation factor GTPase superfamily. Classic translation factor GTPase family. EF-Tu/EF-1A subfamily. In terms of assembly, monomer.

It localises to the cytoplasm. The enzyme catalyses GTP + H2O = GDP + phosphate + H(+). GTP hydrolase that promotes the GTP-dependent binding of aminoacyl-tRNA to the A-site of ribosomes during protein biosynthesis. The protein is Elongation factor Tu of Helicobacter pylori (strain ATCC 700392 / 26695) (Campylobacter pylori).